Reading from the N-terminus, the 379-residue chain is MTVTEIFDNQPICIDNGSGFIKAGFAGDDIPKCLFPTCVGRIKHERVMPSSIQKDMFVGSEAQNLRGLLKIQRPIERGIIQNWSDMEEIWSYIYSDQQLNTLPEEHPLLLTEPPLANIRNKEKIAEYFYETLNVPALSFSLQPVLALYASARTTGIVLECGDGLTHSVPIYDGFSIPSAIQQEEIGGRDVTDYLQLQLRKSGHELVSSAEKEIVREIKEKCCYVASDFRSEIESWTEHKPQIHTYQLPDNQTITLGTECFSAPEVLFNPEMMGSEASGLHIQLFKSILLSDIDLRSTLYSNIVLSGGSTLLRGFGERFISELRAISGKKNQVKIYASPERMHNAWLGGSILASLSTFRRLLITSEEYKNDQNVIFRRRF.

Belongs to the actin family. ARP1 subfamily. In terms of assembly, self-associates to form an actin-like filament of 8-10 monomers. Component of the dynactin complex.

The protein resides in the cytoplasm. The protein localises to the cytoskeleton. Core component of the dynactin complex which assists cytoplasmic dynein by increasing its processivity and by regulation of its cargo binding. The dynactin complex is required for the spindle translocation late in anaphase and is involved in a cell wall synthesis checkpoint. Arp1 forms the backbone filament of the dynactin rod structure and serves as the scaffold for the remaining subunits. Required for proper orientation of the mitotic spindle. This chain is Centractin (arp1), found in Schizosaccharomyces pombe (strain 972 / ATCC 24843) (Fission yeast).